A 223-amino-acid chain; its full sequence is Protein BTG4 (223 aa).

It belongs to the BTG family. In terms of assembly, interacts with CNOT7. Interacts with EIF4E. Interacts with CNOT8. In terms of tissue distribution, expressed in oocytes after germinal vesicle breakdown. Expressed in testis and in olfactory epithelium.

Adapter protein that bridges CNOT7, a catalytic subunit of the CCR4-NOT complex, to EIF4E. Facilitates maternal mRNAs decay during the maturation of oocytes and in the fertilized egg, and is required for the maternal-zygotic transition (MZT), zygotic cleavage and initiation of embryonic development. This chain is Protein BTG4 (BTG4), found in Homo sapiens (Human).